Here is a 521-residue protein sequence, read N- to C-terminus: Interleukin-9 receptor (521 aa).

The signal sequence occupies residues 1–40 (MGLGRCIWEGWTLESEALRRDMGTWLLACICICTCVCLGV). Topologically, residues 41 to 270 (SVTGEGQGPR…GPLIPPWGWP (230 aa)) are extracellular. N-linked (GlcNAc...) asparagine glycans are attached at residues Asn-117 and Asn-156. Positions 149 to 259 (PPSDLQSNIS…QPVCFQAPQR (111 aa)) constitute a Fibronectin type-III domain. The short motif at 245 to 249 (WSEWS) is the WSXWS motif element. Residues 271–291 (GNTLVAVSIFLLLTGPTYLLF) traverse the membrane as a helical segment. The Cytoplasmic portion of the chain corresponds to 292-521 (KLSPRVKRIF…VLSKARSWTF (230 aa)). The Box 1 motif signature appears at 301–309 (FYQNVPSPA). The tract at residues 413 to 439 (WAPTSLTRPAPPDSEGSRSSSSSSSSN) is disordered. Over residues 429–439 (SRSSSSSSSSN) the composition is skewed to low complexity.

It belongs to the type I cytokine receptor family. Type 4 subfamily. In terms of assembly, interacts with IL9.

It is found in the cell membrane. The protein localises to the secreted. Functionally, plays an important role in the immune response against parasites by acting as a receptor of IL9. The chain is Interleukin-9 receptor (IL9R) from Homo sapiens (Human).